We begin with the raw amino-acid sequence, 327 residues long: Acetaldehyde dehydrogenase 6 (327 aa).

15–18 (SGNI) contacts NAD(+). Cys133 functions as the Acyl-thioester intermediate in the catalytic mechanism. NAD(+) is bound by residues 164–172 (SAGPGTRAN) and Asn297.

This sequence belongs to the acetaldehyde dehydrogenase family.

The catalysed reaction is acetaldehyde + NAD(+) + CoA = acetyl-CoA + NADH + H(+). The chain is Acetaldehyde dehydrogenase 6 from Rhodococcus opacus (strain B4).